A 214-amino-acid polypeptide reads, in one-letter code: Thiamine-phosphate synthase (214 aa).

4-amino-2-methyl-5-(diphosphooxymethyl)pyrimidine contacts are provided by residues 37–41 (QYREK) and N73. Residues D74 and D93 each contribute to the Mg(2+) site. 4-amino-2-methyl-5-(diphosphooxymethyl)pyrimidine is bound at residue S112. 139 to 141 (TIS) contributes to the 2-[(2R,5Z)-2-carboxy-4-methylthiazol-5(2H)-ylidene]ethyl phosphate binding site. 4-amino-2-methyl-5-(diphosphooxymethyl)pyrimidine is bound at residue K142. Residues G171 and 191 to 192 (IS) each bind 2-[(2R,5Z)-2-carboxy-4-methylthiazol-5(2H)-ylidene]ethyl phosphate.

The protein belongs to the thiamine-phosphate synthase family. Mg(2+) is required as a cofactor.

It catalyses the reaction 2-[(2R,5Z)-2-carboxy-4-methylthiazol-5(2H)-ylidene]ethyl phosphate + 4-amino-2-methyl-5-(diphosphooxymethyl)pyrimidine + 2 H(+) = thiamine phosphate + CO2 + diphosphate. The catalysed reaction is 2-(2-carboxy-4-methylthiazol-5-yl)ethyl phosphate + 4-amino-2-methyl-5-(diphosphooxymethyl)pyrimidine + 2 H(+) = thiamine phosphate + CO2 + diphosphate. The enzyme catalyses 4-methyl-5-(2-phosphooxyethyl)-thiazole + 4-amino-2-methyl-5-(diphosphooxymethyl)pyrimidine + H(+) = thiamine phosphate + diphosphate. It participates in cofactor biosynthesis; thiamine diphosphate biosynthesis; thiamine phosphate from 4-amino-2-methyl-5-diphosphomethylpyrimidine and 4-methyl-5-(2-phosphoethyl)-thiazole: step 1/1. Functionally, condenses 4-methyl-5-(beta-hydroxyethyl)thiazole monophosphate (THZ-P) and 2-methyl-4-amino-5-hydroxymethyl pyrimidine pyrophosphate (HMP-PP) to form thiamine monophosphate (TMP). The chain is Thiamine-phosphate synthase from Listeria monocytogenes serotype 4b (strain CLIP80459).